Here is a 123-residue protein sequence, read N- to C-terminus: Fluoride-specific ion channel FluC 2 (123 aa).

2 helical membrane passes run methionine 1–aspartate 21 and valine 30–isoleucine 50. 2 residues coordinate Na(+): glycine 74 and threonine 77. A helical membrane pass occupies residues alanine 99–leucine 119.

Belongs to the fluoride channel Fluc/FEX (TC 1.A.43) family.

The protein localises to the cell membrane. It carries out the reaction fluoride(in) = fluoride(out). Na(+) is not transported, but it plays an essential structural role and its presence is essential for fluoride channel function. Fluoride-specific ion channel. Important for reducing fluoride concentration in the cell, thus reducing its toxicity. This chain is Fluoride-specific ion channel FluC 2, found in Cutibacterium acnes (strain DSM 16379 / KPA171202) (Propionibacterium acnes).